Reading from the N-terminus, the 232-residue chain is Phosphatidylserine decarboxylase proenzyme (232 aa).

The Schiff-base intermediate with substrate; via pyruvic acid role is filled by Ser-190. Ser-190 is modified (pyruvic acid (Ser); by autocatalysis).

The protein belongs to the phosphatidylserine decarboxylase family. PSD-A subfamily. As to quaternary structure, heterodimer of a large membrane-associated beta subunit and a small pyruvoyl-containing alpha subunit. Requires pyruvate as cofactor. Post-translationally, is synthesized initially as an inactive proenzyme. Formation of the active enzyme involves a self-maturation process in which the active site pyruvoyl group is generated from an internal serine residue via an autocatalytic post-translational modification. Two non-identical subunits are generated from the proenzyme in this reaction, and the pyruvate is formed at the N-terminus of the alpha chain, which is derived from the carboxyl end of the proenzyme. The post-translation cleavage follows an unusual pathway, termed non-hydrolytic serinolysis, in which the side chain hydroxyl group of the serine supplies its oxygen atom to form the C-terminus of the beta chain, while the remainder of the serine residue undergoes an oxidative deamination to produce ammonia and the pyruvoyl prosthetic group on the alpha chain.

The protein localises to the cell membrane. The catalysed reaction is a 1,2-diacyl-sn-glycero-3-phospho-L-serine + H(+) = a 1,2-diacyl-sn-glycero-3-phosphoethanolamine + CO2. It participates in phospholipid metabolism; phosphatidylethanolamine biosynthesis; phosphatidylethanolamine from CDP-diacylglycerol: step 2/2. Its function is as follows. Catalyzes the formation of phosphatidylethanolamine (PtdEtn) from phosphatidylserine (PtdSer). The chain is Phosphatidylserine decarboxylase proenzyme from Mesorhizobium japonicum (strain LMG 29417 / CECT 9101 / MAFF 303099) (Mesorhizobium loti (strain MAFF 303099)).